The primary structure comprises 274 residues: Nitrogenase iron protein (274 aa).

Position 8-15 (8-15) interacts with ATP; that stretch reads GKGGIGKS. Cysteine 94 contacts [4Fe-4S] cluster. Residue arginine 97 is modified to ADP-ribosylarginine; by dinitrogenase reductase ADP-ribosyltransferase. Cysteine 131 lines the [4Fe-4S] cluster pocket.

Belongs to the NifH/BchL/ChlL family. As to quaternary structure, homodimer. The cofactor is [4Fe-4S] cluster. In terms of processing, the reversible ADP-ribosylation of Arg-97 inactivates the nitrogenase reductase and regulates nitrogenase activity.

The catalysed reaction is N2 + 8 reduced [2Fe-2S]-[ferredoxin] + 16 ATP + 16 H2O = H2 + 8 oxidized [2Fe-2S]-[ferredoxin] + 2 NH4(+) + 16 ADP + 16 phosphate + 6 H(+). In terms of biological role, the key enzymatic reactions in nitrogen fixation are catalyzed by the nitrogenase complex, which has 2 components: the iron protein and the molybdenum-iron protein. In Desulfatibacillum aliphaticivorans, this protein is Nitrogenase iron protein.